Reading from the N-terminus, the 302-residue chain is Calpain-1 catalytic subunit (302 aa).

The interval 1 to 114 (RESGCSFVLA…KRAGTQELDD (114 aa)) is domain III. The interval 115 to 130 (QIQANLPDEQVLSAEE) is linker. A domain IV region spans residues 131 to 301 (IDENFKALFR…LFKWLQLTMF (171 aa)). EF-hand domains follow at residues 173–206 (FSMESCRSMVNLMDRDGNGKLGLVEFNILWNRIR), 203–238 (NRIRNYLAIFRKFDLDKSGSMSAYEMRMAIESAGFK), and 268–302 (VRLETMFRFFKTLDTDLDGVVTFDLFKWLQLTMFA). Residues Asp186, Asp188, Asn190, Lys192, Glu197, Asp216, Asp218, Ser220, Ser222, and Glu227 each coordinate Ca(2+).

It belongs to the peptidase C2 family. As to quaternary structure, forms a heterodimer with a small (regulatory) subunit CAPNS1. Ca(2+) serves as cofactor. In terms of processing, the N-terminus is blocked. Undergoes calcium-induced successive autoproteolytic cleavages that generate a membrane-bound 78 kDa active form and an intracellular 75 kDa active form. Calpastatin reduces with high efficiency the transition from 78 kDa to 75 kDa calpain forms. Ubiquitous.

Its subcellular location is the cytoplasm. The protein resides in the cell membrane. It carries out the reaction Broad endopeptidase specificity.. Activated by micromolar concentrations of calcium and inhibited by calpastatin. Its function is as follows. Calcium-regulated non-lysosomal thiol-protease which catalyzes limited proteolysis of substrates involved in cytoskeletal remodeling and signal transduction. Proteolytically cleaves CTBP1. Cleaves and activates caspase-7 (CASP7). The chain is Calpain-1 catalytic subunit from Oryctolagus cuniculus (Rabbit).